The following is a 1255-amino-acid chain: Kinesin-related protein 7 (1255 aa).

A disordered region spans residues M1–S26. Residues N28–I349 enclose the Kinesin motor domain. An ATP-binding site is contributed by G107–T114. Composition is skewed to low complexity over residues N454–N491, N545–G563, and H583–S603. Disordered regions lie at residues N454–F503, G530–Y564, D579–N628, E661–T686, E795–I864, and I915–K934. Polar residues predominate over residues V608–N628. Residues G813–E834 show a composition bias toward acidic residues. A compositionally biased stretch (low complexity) spans I915–S932. A helical transmembrane segment spans residues I945 to L965. A coiled-coil region spans residues N1088–L1223.

Belongs to the TRAFAC class myosin-kinesin ATPase superfamily. Kinesin family.

Its subcellular location is the nucleus membrane. The protein resides in the cytoplasm. It localises to the cytoskeleton. In terms of biological role, microtubule-associated force-producing protein that plays a role in organelle transport. Its motor activity is directed toward the microtubule's plus end. May be involved in cell motility or cell differentiation during prestalk formation. The protein is Kinesin-related protein 7 (kif7) of Dictyostelium discoideum (Social amoeba).